Here is a 431-residue protein sequence, read N- to C-terminus: Cyclin-B2-4 (431 aa).

Positions 1 to 30 (MGGSDENRHGVIGPMNRQQGGLRGGKVIPT) are disordered.

This sequence belongs to the cyclin family. Cyclin AB subfamily. In terms of assembly, interacts with SMR11.

The sequence is that of Cyclin-B2-4 (CYCB2-4) from Arabidopsis thaliana (Mouse-ear cress).